The chain runs to 467 residues: 3-isopropylmalate dehydratase large subunit (467 aa).

C347, C407, and C410 together coordinate [4Fe-4S] cluster.

This sequence belongs to the aconitase/IPM isomerase family. LeuC type 1 subfamily. In terms of assembly, heterodimer of LeuC and LeuD. [4Fe-4S] cluster serves as cofactor.

The catalysed reaction is (2R,3S)-3-isopropylmalate = (2S)-2-isopropylmalate. The protein operates within amino-acid biosynthesis; L-leucine biosynthesis; L-leucine from 3-methyl-2-oxobutanoate: step 2/4. Functionally, catalyzes the isomerization between 2-isopropylmalate and 3-isopropylmalate, via the formation of 2-isopropylmaleate. This chain is 3-isopropylmalate dehydratase large subunit, found in Synechococcus sp. (strain JA-3-3Ab) (Cyanobacteria bacterium Yellowstone A-Prime).